A 573-amino-acid chain; its full sequence is BICD family-like cargo adapter 1 (573 aa).

The disordered stretch occupies residues 67–97 (ERPSDPGEHPQAEPGSLAEGAGPQPPPSQDP). Basic and acidic residues predominate over residues 68 to 77 (RPSDPGEHPQ). The short motif at 113-117 (AARLG) is the CC1 box element. Positions 118-376 (KALLERNQDM…QLWEAYCQVR (259 aa)) form a coiled coil. The interval 386 to 412 (DSADSAVSTDSSMDESSETSSAKDVPA) is disordered. Low complexity predominate over residues 387 to 396 (SADSAVSTDS). Residues 440-525 (LSVEMTALKE…LEAWQDDMHR (86 aa)) are a coiled coil.

This sequence belongs to the BICDR family. As to quaternary structure, part of a tripartite complex with dynein and dynactin, acts an adapter linking the dynein motor complex and dynactin. Interacts with KIF1C. Interacts with RAB6A and RAB6B; interaction is specific to Rab6.

The protein resides in the cytoplasm. Its subcellular location is the cytoskeleton. The protein localises to the microtubule organizing center. It is found in the centrosome. Acts as an adapter protein linking the dynein motor complex to various cargos and converts dynein from a non-processive to a highly processive motor in the presence of dynactin. Facilitates the interaction between dynein and dynactin and activates dynein processivity (the ability to move along a microtubule for a long distance without falling off the track). Predominantly recruits 2 dyneins, which increases both the force and speed of the microtubule motor. Component of secretory vesicle machinery in developing neurons that acts as a regulator of neurite outgrowth. Regulates the secretory vesicle transport by controlling the accumulation of Rab6-containing secretory vesicles in the pericentrosomal region restricting anterograde secretory transport during the early phase of neuronal differentiation, thereby inhibiting neuritogenesis. The polypeptide is BICD family-like cargo adapter 1 (BICDL1) (Homo sapiens (Human)).